A 241-amino-acid polypeptide reads, in one-letter code: Triosephosphate isomerase (241 aa).

Position 9–11 (9–11 (NWK)) interacts with substrate. His-96 (electrophile) is an active-site residue. Glu-165 (proton acceptor) is an active-site residue. Residues Gly-171, Ser-204, and 225–226 (GG) each bind substrate.

It belongs to the triosephosphate isomerase family. Homodimer.

The protein localises to the cytoplasm. The enzyme catalyses D-glyceraldehyde 3-phosphate = dihydroxyacetone phosphate. The protein operates within carbohydrate biosynthesis; gluconeogenesis. It participates in carbohydrate degradation; glycolysis; D-glyceraldehyde 3-phosphate from glycerone phosphate: step 1/1. In terms of biological role, involved in the gluconeogenesis. Catalyzes stereospecifically the conversion of dihydroxyacetone phosphate (DHAP) to D-glyceraldehyde-3-phosphate (G3P). This Prochlorococcus marinus (strain MIT 9301) protein is Triosephosphate isomerase.